Reading from the N-terminus, the 314-residue chain is Mitochondrial translation factor 2 (314 aa).

Residues 111-136 form a disordered region; sequence ENSSNIYDPSSPPDSPRKQQTHLGTI.

Component of the MRH5C complex, composed of mrh5, ppr4, mtf2, and sls1. Proteins mtf2 and sls1 form a subcomplex that serves as a scaffold to bring mrh5 and ppr4 together. The MRH5C complex associates with the small subunit of the mitochondrial ribosome.

Functionally, translation activation factor that as part of the MRH5C complex specifically recruits cox1 mRNA to the mitochondrial ribosome for translation initiation. The protein is Mitochondrial translation factor 2 of Schizosaccharomyces pombe (strain 972 / ATCC 24843) (Fission yeast).